The primary structure comprises 396 residues: L-lactate dehydrogenase (396 aa).

Positions 1–380 constitute an FMN hydroxy acid dehydrogenase domain; the sequence is MIISAASDYR…SGDSLVQELG (380 aa). A substrate-binding site is contributed by tyrosine 24. FMN contacts are provided by serine 106 and glutamine 127. Position 129 (tyrosine 129) interacts with substrate. Threonine 155 is an FMN binding site. Arginine 164 is a substrate binding site. Position 251 (lysine 251) interacts with FMN. Histidine 275 serves as the catalytic Proton acceptor. Arginine 278 lines the substrate pocket. 306-330 lines the FMN pocket; it reads DSGIRNGLDVVRMIALGADTVLLGR.

It belongs to the FMN-dependent alpha-hydroxy acid dehydrogenase family. Requires FMN as cofactor.

The protein localises to the cell inner membrane. The catalysed reaction is (S)-lactate + A = pyruvate + AH2. Catalyzes the conversion of L-lactate to pyruvate. Is coupled to the respiratory chain. The polypeptide is L-lactate dehydrogenase (Salmonella schwarzengrund (strain CVM19633)).